A 249-amino-acid polypeptide reads, in one-letter code: Probable transcriptional regulatory protein Sfum_0996 (249 aa).

It belongs to the TACO1 family.

It is found in the cytoplasm. This is Probable transcriptional regulatory protein Sfum_0996 from Syntrophobacter fumaroxidans (strain DSM 10017 / MPOB).